A 352-amino-acid chain; its full sequence is Ferredoxin--NADP reductase 2 (352 aa).

Residues Glu36, Lys44, Tyr48, Ile88, Leu123, Asp290, and Ser331 each coordinate FAD.

It belongs to the ferredoxin--NADP reductase type 2 family. As to quaternary structure, homodimer. The cofactor is FAD.

It carries out the reaction 2 reduced [2Fe-2S]-[ferredoxin] + NADP(+) + H(+) = 2 oxidized [2Fe-2S]-[ferredoxin] + NADPH. The sequence is that of Ferredoxin--NADP reductase 2 from Exiguobacterium sibiricum (strain DSM 17290 / CCUG 55495 / CIP 109462 / JCM 13490 / 255-15).